The following is a 566-amino-acid chain: Transcription factor atf1 (566 aa).

Positions 1-42 (MSPSPVNTSTEPASVAAVSNGNATASSTQVPENNQSDSFAPP) are enriched in polar residues. Disordered stretches follow at residues 1 to 83 (MSPS…FVGS), 96 to 117 (SFGS…PSLS), 315 to 345 (QQQT…PQAS), and 357 to 479 (SQQF…KSFL). Positions 43-53 (SNNSQQNQQSS) are enriched in low complexity. Composition is skewed to polar residues over residues 65-76 (ANANPADQSDGV) and 97-106 (FGSTASVGQG). The segment covering 107-117 (NPSLNRNPSLS) has biased composition (low complexity). Polar residues-rich tracts occupy residues 379 to 412 (TLRQ…TANS) and 421 to 460 (TDYS…YSKG). A compositionally biased stretch (basic and acidic residues) spans 466-479 (SKNETDEEKRKSFL). One can recognise a bZIP domain in the interval 472-535 (EEKRKSFLER…VSLKTLLIAH (64 aa)). The basic motif stretch occupies residues 474–503 (KRKSFLERNRQAALKCRQRKKQWLSNLQAK). Residues 514-528 (LSAQVSALREEIVSL) are leucine-zipper.

The protein belongs to the bZIP family. As to quaternary structure, heterodimer of pcr1/mts2 and atf1/mts1. In terms of processing, phosphorylated by sty1/spc1.

The protein resides in the nucleus. Its function is as follows. Transcription factor required for sexual development and entry into stationary phase. Binds and activates CRE sites (cAMP-response elements, also known as M26 meiotic recombination hotspots). This chain is Transcription factor atf1 (atf1), found in Schizosaccharomyces pombe (strain 972 / ATCC 24843) (Fission yeast).